The primary structure comprises 154 residues: Large ribosomal subunit protein uL13 (154 aa).

It belongs to the universal ribosomal protein uL13 family. In terms of assembly, part of the 50S ribosomal subunit.

Functionally, this protein is one of the early assembly proteins of the 50S ribosomal subunit, although it is not seen to bind rRNA by itself. It is important during the early stages of 50S assembly. In Rhizobium leguminosarum bv. trifolii (strain WSM2304), this protein is Large ribosomal subunit protein uL13.